Consider the following 307-residue polypeptide: Inner spore coat protein H-like protein (307 aa).

This sequence belongs to the CotH family.

It is found in the spore coat. Functionally, involved in the assembly of several proteins in the inner and outer layer of the spore coat. This is Inner spore coat protein H-like protein (yisJ) from Bacillus subtilis (strain 168).